The following is a 316-amino-acid chain: N-acetylmuramic acid 6-phosphate etherase (316 aa).

The disordered stretch occupies residues 1–23 (MAGFDPTLQPSDDRGHLLTEQSN). The SIS domain occupies 66–229 (ISKRLSSGGR…STTVMVRLGK (164 aa)). The active-site Proton donor is the Glu-94. Glu-125 is an active-site residue.

This sequence belongs to the GCKR-like family. MurNAc-6-P etherase subfamily. Homodimer.

The catalysed reaction is N-acetyl-D-muramate 6-phosphate + H2O = N-acetyl-D-glucosamine 6-phosphate + (R)-lactate. It participates in amino-sugar metabolism; N-acetylmuramate degradation. Functionally, specifically catalyzes the cleavage of the D-lactyl ether substituent of MurNAc 6-phosphate, producing GlcNAc 6-phosphate and D-lactate. In Synechococcus sp. (strain CC9902), this protein is N-acetylmuramic acid 6-phosphate etherase.